The primary structure comprises 208 residues: Methylthioribulose-1-phosphate dehydratase (208 aa).

Zn(2+) contacts are provided by histidine 99 and histidine 101.

Belongs to the aldolase class II family. MtnB subfamily. The cofactor is Zn(2+).

It catalyses the reaction 5-(methylsulfanyl)-D-ribulose 1-phosphate = 5-methylsulfanyl-2,3-dioxopentyl phosphate + H2O. It functions in the pathway amino-acid biosynthesis; L-methionine biosynthesis via salvage pathway; L-methionine from S-methyl-5-thio-alpha-D-ribose 1-phosphate: step 2/6. Functionally, catalyzes the dehydration of methylthioribulose-1-phosphate (MTRu-1-P) into 2,3-diketo-5-methylthiopentyl-1-phosphate (DK-MTP-1-P). The protein is Methylthioribulose-1-phosphate dehydratase of Aquifex aeolicus (strain VF5).